The chain runs to 651 residues: MLSVPHLDREFDYLVSAEQSDDAQPGVRVRVRFHGRLVDGFVLERRNDTEHFGKLGWLDRVVSAQPVLTAEVRRLVDAVVARYAGTRPDVLRLAVPTRHARVERETLAIPVSPLPLIPGPVDPSGWEVYGRGGQFLTALAESRAARAVWQALPGEQWADRFAEAAAQAIRAGRAALAIVPDQRDLDVLWRAVTTRVDERSVVALSAGLGQAVRYQRWLKVLRGSARLVIGTRSAVFAPVNDLGLVMVWSDADDMLAEPRAPYPHAREVAMLRAYQARCAALIGGYTRTAEAHALVRSGWAHDVVAARSVVRARAPRVVALDDSGYAEESDPAARTARLPSIALRAARSALAAGAPVLVQVPRRGYVPSLACGRCRTLARCRHCTGPLSLLDRATPGTVCCWCGRADLTLRCARCGSEVVRAVVVGARRTAEELGRAFAGMPVITSVGDTIVPEVGARPALVVATPGAEPRAPGGYGAALLLDTWALLGRQDLRAAEEALWRWMTAAALVRARGDGGVVMVVAEASIPTVQSLMRWDPASHAEAELAARTEVGLPPSVHIAAVDGTTGAVNELLQEARLPDEADLLGPVDLPQGVRRPAGTPLGAPISRLLVRVPREQGWQLAASLRRGIGVLSVRQTHQLVRVQIDPLHIG.

Zn(2+) contacts are provided by C371, C374, C380, C383, C399, C402, C411, and C414.

It belongs to the helicase family. PriA subfamily. As to quaternary structure, component of the replication restart primosome. The cofactor is Zn(2+).

Initiates the restart of stalled replication forks, which reloads the replicative helicase on sites other than the origin of replication. Recognizes and binds to abandoned replication forks and remodels them to uncover a helicase loading site. Promotes assembly of the primosome at these replication forks. This is Probable replication restart protein PriA from Mycobacterium leprae (strain TN).